The primary structure comprises 791 residues: uncharacterized protein (791 aa).

4 helical membrane passes run 104–124, 131–151, 177–197, and 226–246; these read MWILAFGLATVIAGVDAFFLM, IAAIVALLVAYPLGQLWYYII, ACLYIFVNICVSAKLVNTLII, and WSGLALPILVYPPTLIWPSVL. Asn265 carries N-linked (GlcNAc...) asparagine glycosylation. The next 8 helical transmembrane spans lie at 274–294, 309–329, 346–366, 421–441, 471–491, 501–521, 533–553, and 583–603; these read FFIVFVASFIWYWFPDLIFPA, SAVLSQIFGVKTGLGLFPLTL, WATCCIFTSFVFWIWIVLPGL, FIINIALSLGAFSSMMISFFL, VHWGFYLASIIVSLGLGFAFT, SYGFVVSMVIGAALYIPLSLI, AFFEIVAAFWFNGQPMALLYF, and LVAALLFTSGIWSSLVNSAVT. A glycan (N-linked (GlcNAc...) asparagine) is linked at Asn621. The next 3 helical transmembrane spans lie at 653–673, 697–717, and 733–753; these read FVMWFFLVGAVVSVVVYLLQI, SVTGINYSTWAAVAFCFNYLI, and AAAMDCGVAIAGLFIYFCVVY. A glycan (N-linked (GlcNAc...) asparagine) is linked at Asn759.

It belongs to the oligopeptide OPT transporter family.

The protein localises to the membrane. This is an uncharacterized protein from Schizosaccharomyces pombe (strain 972 / ATCC 24843) (Fission yeast).